The chain runs to 311 residues: Glycerol-3-phosphate dehydrogenase [NAD(P)+] (311 aa).

Residues Trp-12, Arg-31, Arg-32, and Lys-96 each coordinate NADPH. Sn-glycerol 3-phosphate contacts are provided by Lys-96, Gly-124, and Ser-126. Ala-128 serves as a coordination point for NADPH. Sn-glycerol 3-phosphate contacts are provided by Lys-178, Asp-231, Ser-241, Arg-242, and Asn-243. Lys-178 (proton acceptor) is an active-site residue. Arg-242 provides a ligand contact to NADPH. NADPH-binding residues include Val-266 and Glu-268.

This sequence belongs to the NAD-dependent glycerol-3-phosphate dehydrogenase family.

It is found in the cytoplasm. It catalyses the reaction sn-glycerol 3-phosphate + NAD(+) = dihydroxyacetone phosphate + NADH + H(+). It carries out the reaction sn-glycerol 3-phosphate + NADP(+) = dihydroxyacetone phosphate + NADPH + H(+). The protein operates within membrane lipid metabolism; glycerophospholipid metabolism. Catalyzes the reduction of the glycolytic intermediate dihydroxyacetone phosphate (DHAP) to sn-glycerol 3-phosphate (G3P), the key precursor for phospholipid synthesis. The polypeptide is Glycerol-3-phosphate dehydrogenase [NAD(P)+] (Helicobacter hepaticus (strain ATCC 51449 / 3B1)).